A 1055-amino-acid chain; its full sequence is Leukotoxin (1055 aa).

Residues Gln11 to Leu49 adopt a coiled-coil conformation. 2 cholesterol recognition/amino acid consensus (CRAC) region regions span residues Leu334 to Arg340 and Val502 to Lys506. Hemolysin-type calcium-binding repeat units lie at residues Ile721–Phe738, His739–Leu756, Tyr757–Leu774, Tyr775–Leu792, Asp793–Leu810, Arg811–Leu828, and Asp829–Tyr846. Residues Gly795–Gly815 are disordered. Residues Lys990–Lys1009 form a disordered region. Low complexity predominate over residues Ser993 to Leu1006.

This sequence belongs to the RTX prokaryotic toxin (TC 1.C.11) family. Interacts specifically with the superoxide dismutase [Cu-Zn]. This interaction may protect LtxA from reactive oxygen species and reactive nitrogen species produced by host inflammatory cells during disease. Interacts with the human leukocyte adhesion glycoprotein LFA-1 (ITGAL-ITGB2). In terms of processing, acylated at Lys-562 and Lys-687 by LtxC. This modification is required for full activity. Isolated methyl esters contain palmitoyl and palmitolyl fatty acyl groups with smaller quantities of myristic and stearic fatty acids.

The protein resides in the cell outer membrane. The protein localises to the secreted. Functionally, virulence factor that plays an important role in immune evasion. Lyses human lymphocytes and monocytes. Binds to the LFA-1 integrin on the surface of the host cell and to cholesterol-containing membranes, which probably results in large LtxA-LFA-1 clusters in lipid rafts. Also shows beta-hemolytic activity on certain types of growth media. This chain is Leukotoxin, found in Aggregatibacter actinomycetemcomitans (Actinobacillus actinomycetemcomitans).